Reading from the N-terminus, the 26-residue chain is Omega-conotoxin TVIA (26 aa).

3 disulfide bridges follow: C1–C16, C8–C19, and C15–C26. 4-hydroxyproline occurs at positions 4, 10, and 21.

The protein belongs to the conotoxin O1 superfamily. As to expression, expressed by the venom duct.

The protein localises to the secreted. In terms of biological role, omega-conotoxins act at presynaptic membranes, they bind and block voltage-gated calcium channels (Cav). In Conus tulipa (Fish-hunting cone snail), this protein is Omega-conotoxin TVIA.